Here is a 245-residue protein sequence, read N- to C-terminus: tRNA pseudouridine synthase A (245 aa).

Asp-52 (nucleophile) is an active-site residue. Tyr-111 contacts substrate.

It belongs to the tRNA pseudouridine synthase TruA family. In terms of assembly, homodimer.

The enzyme catalyses uridine(38/39/40) in tRNA = pseudouridine(38/39/40) in tRNA. Formation of pseudouridine at positions 38, 39 and 40 in the anticodon stem and loop of transfer RNAs. The chain is tRNA pseudouridine synthase A from Rhodopseudomonas palustris (strain HaA2).